The primary structure comprises 105 residues: Met repressor (105 aa).

It belongs to the MetJ family. As to quaternary structure, homodimer.

The protein resides in the cytoplasm. Functionally, this regulatory protein, when combined with SAM (S-adenosylmethionine) represses the expression of the methionine regulon and of enzymes involved in SAM synthesis. This Yersinia enterocolitica serotype O:8 / biotype 1B (strain NCTC 13174 / 8081) protein is Met repressor.